Consider the following 586-residue polypeptide: CTP synthase 2 (586 aa).

The region spanning 300-554 (SIALVGKYTK…LAATGNLNAH (255 aa)) is the Glutamine amidotransferase type-1 domain. Residues Cys-399, His-526, and Glu-528 each act as for GATase activity in the active site. A phosphoserine mark is found at Ser-568, Ser-571, and Ser-574.

Belongs to the CTP synthase family.

The catalysed reaction is UTP + L-glutamine + ATP + H2O = CTP + L-glutamate + ADP + phosphate + 2 H(+). The protein operates within pyrimidine metabolism; CTP biosynthesis via de novo pathway; CTP from UDP: step 2/2. In terms of biological role, catalyzes the ATP-dependent amination of UTP to CTP with either L-glutamine or ammonia as the source of nitrogen. Constitutes the rate-limiting enzyme in the synthesis of cytosine nucleotides. This is CTP synthase 2 (Ctps2) from Mus musculus (Mouse).